The following is a 122-amino-acid chain: Large ribosomal subunit protein uL14 (122 aa).

It belongs to the universal ribosomal protein uL14 family. As to quaternary structure, part of the 50S ribosomal subunit. Forms a cluster with proteins L3 and L19. In the 70S ribosome, L14 and L19 interact and together make contacts with the 16S rRNA in bridges B5 and B8.

Functionally, binds to 23S rRNA. Forms part of two intersubunit bridges in the 70S ribosome. This chain is Large ribosomal subunit protein uL14, found in Nocardia farcinica (strain IFM 10152).